A 360-amino-acid polypeptide reads, in one-letter code: Lactosylceramide 4-alpha-galactosyltransferase (360 aa).

The Cytoplasmic segment spans residues 1–30 (MGISRSDLEETMSKPPDCLPRMLRGTPRQR). The chain crosses the membrane as a helical; Signal-anchor for type II membrane protein span at residues 31-51 (VFTLFIISFKFTFLVSILIYW). Over 52–360 (HTVGAPKDQR…TTHRAMTMYL (309 aa)) the chain is Lumenal. Positions 199-201 (DTD) match the DXD motif motif. N-linked (GlcNAc...) asparagine glycans are attached at residues Asn-210 and Asn-316.

The protein belongs to the glycosyltransferase 32 family. In terms of tissue distribution, ubiquitous. Highly expressed in kidney, mesenteric lymph node, spleen and brain.

It is found in the golgi apparatus membrane. The enzyme catalyses a beta-D-Gal-(1-&gt;4)-beta-D-Glc-(1&lt;-&gt;1)-Cer(d18:1(4E)) + UDP-alpha-D-galactose = a globoside Gb3Cer (d18:1(4E)) + UDP + H(+). The catalysed reaction is a beta-D-Gal-(1&lt;-&gt;1')-ceramide + UDP-alpha-D-galactose = alpha-D-Gal-(1-&gt;4)-beta-D-Gal-(1&lt;-&gt;1')-Cer + UDP + H(+). It functions in the pathway glycolipid biosynthesis. Its function is as follows. Catalyzes the transfer of galactose from UDP-alpha-D-galactose to lactosylceramide/beta-D-galactosyl-(1-&gt;4)-beta-D-glucosyl-(1&lt;-&gt;1)-ceramide(d18:1(4E)) to produce globotriaosylceramide/globoside Gb3Cer (d18:1(4E)). Also able to transfer galactose to galactosylceramide/beta-D-Gal-(1&lt;-&gt;1')-Cer. Globoside Gb3Cer is a glycosphingolipid of the globo serie, one of the major types of neutral root structures of glycosphingolipids, that constitute a significant portion of mammalian cell membranes. The protein is Lactosylceramide 4-alpha-galactosyltransferase of Rattus norvegicus (Rat).